Consider the following 230-residue polypeptide: Ribosomal RNA large subunit methyltransferase E (230 aa).

5 residues coordinate S-adenosyl-L-methionine: G82, W84, D100, D116, and D140. The Proton acceptor role is filled by K180.

The protein belongs to the class I-like SAM-binding methyltransferase superfamily. RNA methyltransferase RlmE family.

It is found in the cytoplasm. It catalyses the reaction uridine(2552) in 23S rRNA + S-adenosyl-L-methionine = 2'-O-methyluridine(2552) in 23S rRNA + S-adenosyl-L-homocysteine + H(+). Its function is as follows. Specifically methylates the uridine in position 2552 of 23S rRNA at the 2'-O position of the ribose in the fully assembled 50S ribosomal subunit. This is Ribosomal RNA large subunit methyltransferase E from Granulibacter bethesdensis (strain ATCC BAA-1260 / CGDNIH1).